A 357-amino-acid polypeptide reads, in one-letter code: tRNA N6-adenosine threonylcarbamoyltransferase (357 aa).

Fe cation contacts are provided by His120 and His124. Residues 143-147, Asp176, Gly189, and Asn289 contribute to the substrate site; that span reads LVSGG. Asp317 contributes to the Fe cation binding site.

The protein belongs to the KAE1 / TsaD family. Requires Fe(2+) as cofactor.

It is found in the cytoplasm. The catalysed reaction is L-threonylcarbamoyladenylate + adenosine(37) in tRNA = N(6)-L-threonylcarbamoyladenosine(37) in tRNA + AMP + H(+). Its function is as follows. Required for the formation of a threonylcarbamoyl group on adenosine at position 37 (t(6)A37) in tRNAs that read codons beginning with adenine. Is involved in the transfer of the threonylcarbamoyl moiety of threonylcarbamoyl-AMP (TC-AMP) to the N6 group of A37, together with TsaE and TsaB. TsaD likely plays a direct catalytic role in this reaction. In Polynucleobacter asymbioticus (strain DSM 18221 / CIP 109841 / QLW-P1DMWA-1) (Polynucleobacter necessarius subsp. asymbioticus), this protein is tRNA N6-adenosine threonylcarbamoyltransferase.